The primary structure comprises 275 residues: 4-hydroxy-3-methylbut-2-enyl diphosphate reductase (275 aa).

Cys12 contributes to the [4Fe-4S] cluster binding site. Residues His40 and His70 each coordinate (2E)-4-hydroxy-3-methylbut-2-enyl diphosphate. His40 and His70 together coordinate dimethylallyl diphosphate. Isopentenyl diphosphate contacts are provided by His40 and His70. Cys92 is a binding site for [4Fe-4S] cluster. His119 provides a ligand contact to (2E)-4-hydroxy-3-methylbut-2-enyl diphosphate. His119 serves as a coordination point for dimethylallyl diphosphate. Position 119 (His119) interacts with isopentenyl diphosphate. Catalysis depends on Glu121, which acts as the Proton donor. Thr151 contributes to the (2E)-4-hydroxy-3-methylbut-2-enyl diphosphate binding site. Cys181 provides a ligand contact to [4Fe-4S] cluster. (2E)-4-hydroxy-3-methylbut-2-enyl diphosphate-binding residues include Ser209, Ser210, Asn211, and Ser251. The dimethylallyl diphosphate site is built by Ser209, Ser210, Asn211, and Ser251. The isopentenyl diphosphate site is built by Ser209, Ser210, Asn211, and Ser251.

The protein belongs to the IspH family. Requires [4Fe-4S] cluster as cofactor.

It carries out the reaction isopentenyl diphosphate + 2 oxidized [2Fe-2S]-[ferredoxin] + H2O = (2E)-4-hydroxy-3-methylbut-2-enyl diphosphate + 2 reduced [2Fe-2S]-[ferredoxin] + 2 H(+). The catalysed reaction is dimethylallyl diphosphate + 2 oxidized [2Fe-2S]-[ferredoxin] + H2O = (2E)-4-hydroxy-3-methylbut-2-enyl diphosphate + 2 reduced [2Fe-2S]-[ferredoxin] + 2 H(+). Its pathway is isoprenoid biosynthesis; dimethylallyl diphosphate biosynthesis; dimethylallyl diphosphate from (2E)-4-hydroxy-3-methylbutenyl diphosphate: step 1/1. The protein operates within isoprenoid biosynthesis; isopentenyl diphosphate biosynthesis via DXP pathway; isopentenyl diphosphate from 1-deoxy-D-xylulose 5-phosphate: step 6/6. Catalyzes the conversion of 1-hydroxy-2-methyl-2-(E)-butenyl 4-diphosphate (HMBPP) into a mixture of isopentenyl diphosphate (IPP) and dimethylallyl diphosphate (DMAPP). Acts in the terminal step of the DOXP/MEP pathway for isoprenoid precursor biosynthesis. The polypeptide is 4-hydroxy-3-methylbut-2-enyl diphosphate reductase (Thermotoga sp. (strain RQ2)).